The following is a 141-amino-acid chain: uncharacterized protein (141 aa).

In terms of domain architecture, Ferritin-like diiron spans 13-141 (VTKGTELEKE…LKGILDRYFK (129 aa)). The Fe cation site is built by E63, H66, E125, and H128.

This is an uncharacterized protein from Methanocaldococcus jannaschii (strain ATCC 43067 / DSM 2661 / JAL-1 / JCM 10045 / NBRC 100440) (Methanococcus jannaschii).